A 346-amino-acid chain; its full sequence is 3-dehydroquinate synthase (346 aa).

Residues Asp61 to Lys66, Gly95 to Asp99, Thr119 to Thr120, Lys132, and Lys141 each bind NAD(+). Glu174, His233, and His250 together coordinate Zn(2+).

Belongs to the sugar phosphate cyclases superfamily. Dehydroquinate synthase family. The cofactor is NAD(+). Requires Co(2+) as cofactor. Zn(2+) is required as a cofactor.

The protein localises to the cytoplasm. The catalysed reaction is 7-phospho-2-dehydro-3-deoxy-D-arabino-heptonate = 3-dehydroquinate + phosphate. The protein operates within metabolic intermediate biosynthesis; chorismate biosynthesis; chorismate from D-erythrose 4-phosphate and phosphoenolpyruvate: step 2/7. Catalyzes the conversion of 3-deoxy-D-arabino-heptulosonate 7-phosphate (DAHP) to dehydroquinate (DHQ). This chain is 3-dehydroquinate synthase, found in Wolinella succinogenes (strain ATCC 29543 / DSM 1740 / CCUG 13145 / JCM 31913 / LMG 7466 / NCTC 11488 / FDC 602W) (Vibrio succinogenes).